A 213-amino-acid chain; its full sequence is Orotate phosphoribosyltransferase (213 aa).

5-phospho-alpha-D-ribose 1-diphosphate is bound at residue Lys-26. 34-35 (FF) provides a ligand contact to orotate. 5-phospho-alpha-D-ribose 1-diphosphate contacts are provided by residues 72-73 (YK), Arg-99, Lys-100, Lys-103, His-105, and 124-132 (DDVITAGTA). Positions 128 and 156 each coordinate orotate.

The protein belongs to the purine/pyrimidine phosphoribosyltransferase family. PyrE subfamily. Homodimer. Requires Mg(2+) as cofactor.

The enzyme catalyses orotidine 5'-phosphate + diphosphate = orotate + 5-phospho-alpha-D-ribose 1-diphosphate. It participates in pyrimidine metabolism; UMP biosynthesis via de novo pathway; UMP from orotate: step 1/2. Functionally, catalyzes the transfer of a ribosyl phosphate group from 5-phosphoribose 1-diphosphate to orotate, leading to the formation of orotidine monophosphate (OMP). This is Orotate phosphoribosyltransferase from Klebsiella pneumoniae subsp. pneumoniae (strain ATCC 700721 / MGH 78578).